Here is a 685-residue protein sequence, read N- to C-terminus: DNA ligase (685 aa).

Residues 47-51 (DSEYD), 96-97 (SL), and glutamate 125 contribute to the NAD(+) site. The active-site N6-AMP-lysine intermediate is lysine 127. Arginine 148, glutamate 185, lysine 304, and lysine 328 together coordinate NAD(+). 4 residues coordinate Zn(2+): cysteine 422, cysteine 425, cysteine 440, and cysteine 446. The region spanning 605–685 (ADAQPLKGQT…ELLALLAANA (81 aa)) is the BRCT domain.

This sequence belongs to the NAD-dependent DNA ligase family. LigA subfamily. Requires Mg(2+) as cofactor. Mn(2+) serves as cofactor.

It carries out the reaction NAD(+) + (deoxyribonucleotide)n-3'-hydroxyl + 5'-phospho-(deoxyribonucleotide)m = (deoxyribonucleotide)n+m + AMP + beta-nicotinamide D-nucleotide.. Functionally, DNA ligase that catalyzes the formation of phosphodiester linkages between 5'-phosphoryl and 3'-hydroxyl groups in double-stranded DNA using NAD as a coenzyme and as the energy source for the reaction. It is essential for DNA replication and repair of damaged DNA. The polypeptide is DNA ligase (Shewanella baltica (strain OS195)).